The following is a 201-amino-acid chain: MELLKEAIRKRGSVLSSGVLKVDQFLNHQVDTNLMSAIGEEFARLFADEHVTKVVTIESSGIAPSFMCAHSLQVPLIFARKKKSVTMDKENVYSSRVYSFTKKEYSEVTVSKDWLCPGDRVLIIDDFLANGQAATGLTQIVEEAGATVAGIGIVIEKSFQDGRALLEGKGYRIESLARISSLEGNKVQFVEESAHFAYNKS.

Xanthine-binding residues include L20 and N27. A129–A133 is a binding site for 5-phospho-alpha-D-ribose 1-diphosphate. K157 lines the xanthine pocket.

The protein belongs to the purine/pyrimidine phosphoribosyltransferase family. Xpt subfamily. Homodimer.

It localises to the cytoplasm. The catalysed reaction is XMP + diphosphate = xanthine + 5-phospho-alpha-D-ribose 1-diphosphate. It participates in purine metabolism; XMP biosynthesis via salvage pathway; XMP from xanthine: step 1/1. In terms of biological role, converts the preformed base xanthine, a product of nucleic acid breakdown, to xanthosine 5'-monophosphate (XMP), so it can be reused for RNA or DNA synthesis. The protein is Xanthine phosphoribosyltransferase of Shouchella clausii (strain KSM-K16) (Alkalihalobacillus clausii).